Here is a 279-residue protein sequence, read N- to C-terminus: MMSFSQPDAFSPSQFTSSQNAAADSTTPSKSRGASSTMPLTVKQISEAQQSGITGEKGAPFVVDGVETANVRLVGLVSGKTERNTDVSFTIDDGTGRLDFIRWVNDGADSAETAAVQNGMYVSVIGSLKGLQERKRATAFAIRPVTDYNEVTLHFIQCVRMHLENTKSQIGSPAKTYSAMGSSSSNGFSEMTTPTSVKSNPAPVLSVTNGSKTDLNTEVLNVFREPANVESEHGVHIDEIVKRFRLPEAKIKVAIDYLADIGHIYSTIDESHYKSAFNE.

The interval 1–39 (MMSFSQPDAFSPSQFTSSQNAAADSTTPSKSRGASSTMP) is disordered. Positions 71-145 (VRLVGLVSGK…RATAFAIRPV (75 aa)) form a DNA-binding region, OB. The tract at residues 181–210 (GSSSSNGFSEMTTPTSVKSNPAPVLSVTNG) is disordered. Polar residues predominate over residues 190 to 199 (EMTTPTSVKS).

Belongs to the replication factor A protein 2 family. As to quaternary structure, heterotrimer of RPA1, RPA2 and RPA3 (canonical replication protein A complex). Interacts with RPA1A, RPA1B and RPA3. Post-translationally, phosphorylated in a cell-cycle-dependent manner (from the S phase until mitosis). In response to DNA damage, recruited to DNA-repair nuclear foci, as a hypophosphorylated form. In terms of tissue distribution, expressed in root tips, roots, shoot apical meristem (SAM), young leaves, flag leaves and ears, and at lower levels in mature leaves.

Its subcellular location is the nucleus. Its function is as follows. Component of the replication protein A complex (RPA) required for DNA recombination, repair and replication. The activity of RPA is mediated by single-stranded DNA binding and protein interactions. The chain is Replication protein A 32 kDa subunit A (RPA2A) from Oryza sativa subsp. japonica (Rice).